The sequence spans 681 residues: Nucleolar GTP-binding protein 1 (681 aa).

Residues 170–341 (RTLILCGFPN…LRDRACDELL (172 aa)) form the OBG-type G domain. GTP contacts are provided by residues 176-183 (GFPNVGKS), 222-226 (DTPGI), and 290-293 (NKVD).

This sequence belongs to the TRAFAC class OBG-HflX-like GTPase superfamily. OBG GTPase family. NOG subfamily. Ubiquitously expressed.

The protein localises to the nucleus. It localises to the nucleolus. Functionally, involved in the biogenesis of the 60S ribosomal subunit. Has a role in regulating longevity, growth and brood size. May regulate fat storage via the insulin/IGF pathway. The protein is Nucleolar GTP-binding protein 1 of Caenorhabditis elegans.